The chain runs to 356 residues: S-adenosylmethionine:tRNA ribosyltransferase-isomerase (356 aa).

This sequence belongs to the QueA family. Monomer.

It localises to the cytoplasm. It carries out the reaction 7-aminomethyl-7-carbaguanosine(34) in tRNA + S-adenosyl-L-methionine = epoxyqueuosine(34) in tRNA + adenine + L-methionine + 2 H(+). Its pathway is tRNA modification; tRNA-queuosine biosynthesis. In terms of biological role, transfers and isomerizes the ribose moiety from AdoMet to the 7-aminomethyl group of 7-deazaguanine (preQ1-tRNA) to give epoxyqueuosine (oQ-tRNA). The polypeptide is S-adenosylmethionine:tRNA ribosyltransferase-isomerase (Yersinia pseudotuberculosis serotype IB (strain PB1/+)).